A 92-amino-acid polypeptide reads, in one-letter code: N(2)-fixation sustaining protein CowN (92 aa).

It belongs to the CowN family.

Functionally, is required to sustain N(2)-dependent growth in the presence of low levels of carbon monoxide (CO). Probably acts by protecting the N(2) fixation ability of the nitrogenase complex, which is inactivated in the presence of CO. The sequence is that of N(2)-fixation sustaining protein CowN from Rhodopseudomonas palustris (strain BisB18).